The chain runs to 318 residues: Biotin synthase (318 aa).

The Radical SAM core domain occupies 44–273 (LCGNKFDLCT…TVQIRLAGGR (230 aa)). Residues Cys62, Cys66, and Cys69 each coordinate [4Fe-4S] cluster. [2Fe-2S] cluster contacts are provided by Ser106, Cys138, Cys198, and Arg268.

It belongs to the radical SAM superfamily. Biotin synthase family. As to quaternary structure, homodimer. [4Fe-4S] cluster serves as cofactor. [2Fe-2S] cluster is required as a cofactor.

It catalyses the reaction (4R,5S)-dethiobiotin + (sulfur carrier)-SH + 2 reduced [2Fe-2S]-[ferredoxin] + 2 S-adenosyl-L-methionine = (sulfur carrier)-H + biotin + 2 5'-deoxyadenosine + 2 L-methionine + 2 oxidized [2Fe-2S]-[ferredoxin]. The protein operates within cofactor biosynthesis; biotin biosynthesis; biotin from 7,8-diaminononanoate: step 2/2. Its function is as follows. Catalyzes the conversion of dethiobiotin (DTB) to biotin by the insertion of a sulfur atom into dethiobiotin via a radical-based mechanism. The polypeptide is Biotin synthase (Clostridium botulinum (strain Langeland / NCTC 10281 / Type F)).